The following is a 239-amino-acid chain: Ribosomal RNA small subunit methyltransferase G (239 aa).

Residues Gly-77, Phe-82, 128-129 (AE), and Arg-147 each bind S-adenosyl-L-methionine. Positions 216 to 239 (KKQSQTPKKFPRKPGTPNKSPIEG) are disordered.

The protein belongs to the methyltransferase superfamily. RNA methyltransferase RsmG family.

The protein localises to the cytoplasm. Its function is as follows. Specifically methylates the N7 position of guanine in position 535 of 16S rRNA. The sequence is that of Ribosomal RNA small subunit methyltransferase G from Bacillus licheniformis (strain ATCC 14580 / DSM 13 / JCM 2505 / CCUG 7422 / NBRC 12200 / NCIMB 9375 / NCTC 10341 / NRRL NRS-1264 / Gibson 46).